The chain runs to 223 residues: Crossover junction endodeoxyribonuclease RuvC (223 aa).

Active-site residues include aspartate 12, glutamate 73, and aspartate 146. Mg(2+)-binding residues include aspartate 12, glutamate 73, and aspartate 146. The disordered stretch occupies residues 182–223; the sequence is QGKLGKAKSTLNARNNAQVTGDAQVRAGHPSQFERPDRADPR. Residues 190–202 are compositionally biased toward polar residues; the sequence is STLNARNNAQVTG. A compositionally biased stretch (basic and acidic residues) spans 213-223; sequence QFERPDRADPR.

This sequence belongs to the RuvC family. Homodimer which binds Holliday junction (HJ) DNA. The HJ becomes 2-fold symmetrical on binding to RuvC with unstacked arms; it has a different conformation from HJ DNA in complex with RuvA. In the full resolvosome a probable DNA-RuvA(4)-RuvB(12)-RuvC(2) complex forms which resolves the HJ. Mg(2+) serves as cofactor.

It localises to the cytoplasm. It catalyses the reaction Endonucleolytic cleavage at a junction such as a reciprocal single-stranded crossover between two homologous DNA duplexes (Holliday junction).. In terms of biological role, the RuvA-RuvB-RuvC complex processes Holliday junction (HJ) DNA during genetic recombination and DNA repair. Endonuclease that resolves HJ intermediates. Cleaves cruciform DNA by making single-stranded nicks across the HJ at symmetrical positions within the homologous arms, yielding a 5'-phosphate and a 3'-hydroxyl group; requires a central core of homology in the junction. The consensus cleavage sequence is 5'-(A/T)TT(C/G)-3'. Cleavage occurs on the 3'-side of the TT dinucleotide at the point of strand exchange. HJ branch migration catalyzed by RuvA-RuvB allows RuvC to scan DNA until it finds its consensus sequence, where it cleaves and resolves the cruciform DNA. The sequence is that of Crossover junction endodeoxyribonuclease RuvC from Corynebacterium efficiens (strain DSM 44549 / YS-314 / AJ 12310 / JCM 11189 / NBRC 100395).